The following is a 59-amino-acid chain: MKTNREQEIYVERSFKPNNSTIQNLMDIERFILPHTSTSGVARLKMRVISWVGLQFYNY.

As to expression, expressed in hypocotyls, leaves, vasculature, hydathodes, trichomes, pedicels, sepals, filaments, mature pollen, stigma papillae, styles, siliques, root and shoot tips, but not in shoot meristem, petals or root epidermis.

It is found in the cytoplasm. In terms of biological role, involved in regulating carbon and nitrogen allocation to starch and protein. The chain is Protein QUA-QUINE STARCH from Arabidopsis thaliana (Mouse-ear cress).